We begin with the raw amino-acid sequence, 149 residues long: D-aminoacyl-tRNA deacylase (149 aa).

The Gly-cisPro motif, important for rejection of L-amino acids signature appears at 137 to 138; it reads GP.

The protein belongs to the DTD family. As to quaternary structure, homodimer.

The protein resides in the cytoplasm. It catalyses the reaction glycyl-tRNA(Ala) + H2O = tRNA(Ala) + glycine + H(+). The enzyme catalyses a D-aminoacyl-tRNA + H2O = a tRNA + a D-alpha-amino acid + H(+). Its function is as follows. An aminoacyl-tRNA editing enzyme that deacylates mischarged D-aminoacyl-tRNAs. Also deacylates mischarged glycyl-tRNA(Ala), protecting cells against glycine mischarging by AlaRS. Acts via tRNA-based rather than protein-based catalysis; rejects L-amino acids rather than detecting D-amino acids in the active site. By recycling D-aminoacyl-tRNA to D-amino acids and free tRNA molecules, this enzyme counteracts the toxicity associated with the formation of D-aminoacyl-tRNA entities in vivo and helps enforce protein L-homochirality. This chain is D-aminoacyl-tRNA deacylase, found in Janthinobacterium sp. (strain Marseille) (Minibacterium massiliensis).